A 593-amino-acid chain; its full sequence is MTSRRWFHPNITGVEAENLLLTRGVDGSFLARPSKSNPGDFTLSVRRNGAVTHIKIQNTGDYYDLYGGEKFATLAELVQYYMEHHGQLKEKNGDVIELKYPLNCADPTSERWFHGHLSGKEAEKLLTEKGKHGSFLVRESQSHPGDFVLSVRTGDDKGESNDSKSKVTHVMIRCQELKYDVGGGERFDSLTDLVEHYKKNPMVETLGTVLQLKQPLNTTRINAAEIESRVRELSKLAETTDKVKQGFWEEFETLQQQECKLLYSRKEGQRQENKNKNRYKNILPFDHTRVVLHDGDPNEPVSDYINANIIMPEFETKCNNSKPKKSYIATQGCLQNTVNDFWRMVFQENSRVIVMTTKEVERGKSKCVKYWPDECALKEYGVMRVRNVRESAAHDYTLRELKLSKVGQGNTERTVWQYHFRTWPDHGVPSDPGGVLDFLEEVHHKQESIVDAGPVVVHCSAGIGRTGTFIVIDILIDIIREKGVDCDIDVPKTIQMVRSQRSGMVQTEAQYRFIYMAVQHYIETLQRRIEEEQKSKRKGHEYTNIKYSLVDQTSGDQSPLPPCTPTPPCAEMREDSARVYENVGLMQQQRSFR.

Thr-2 is subject to N-acetylthreonine. SH2 domains follow at residues 6–102 (WFHP…KYPL) and 112–216 (WFHG…KQPL). A phosphotyrosine mark is found at Tyr-62 and Tyr-66. One can recognise a Tyrosine-protein phosphatase domain in the interval 247–517 (FWEEFETLQQ…EAQYRFIYMA (271 aa)). Residues Asp-425, 459–465 (CSAGIGR), and Gln-506 each bind substrate. The active-site Phosphocysteine intermediate is Cys-459. A phosphotyrosine; by PDGFR mark is found at Tyr-542 and Tyr-580.

It belongs to the protein-tyrosine phosphatase family. Non-receptor class 2 subfamily. As to quaternary structure, interacts with phosphorylated SIT1, LIME1, BCAR3 and MZPL1. Interacts with FCRL4, FCRL6, ANKHD1, SHB, INPP5D/SHIP1 and CD84. Interacts with MILR1 (tyrosine-phosphorylated). Interacts with FLT1 (tyrosine-phosphorylated), FLT3 (tyrosine-phosphorylated), FLT4 (tyrosine-phosphorylated), KIT and GRB2. Interacts with PTPNS1. Interacts with KIR2DL1; the interaction is enhanced by ARRB2. Interacts (via SH2 domain) with TEK/TIE2 (tyrosine phosphorylated). Interacts with GAB2. Interacts with TERT; the interaction retains TERT in the nucleus. Interacts with PECAM1 and FER. Interacts with EPHA2 (activated); participates in PTK2/FAK1 dephosphorylation in EPHA2 downstream signaling. Interacts with PDGFRA (tyrosine phosphorylated). Interacts with PDGFRB (tyrosine phosphorylated); this interaction increases the PTPN11 phosphatase activity. Interacts with ROS1; this mediates PTPN11 phosphorylation. Interacts with CEACAM1 (via cytoplasmic domain); this interaction depends on the monomer/dimer equilibrium and is phosphorylation-dependent. Interacts with MPIG6B (via ITIM motif). Interacts with SIGLEC10. Interacts with CLEC12B (via ITIM motif); this interaction triggers dephosphorylation and activation of PTPN11. Interacts (via SH2 domains) with NEDD9/CAS-L; the interaction is enhanced when NEDD9/CAS-L is tyrosine phosphorylated. Phosphorylated on Tyr-542 and Tyr-580 upon receptor protein tyrosine kinase activation; which creates a binding site for GRB2 and other SH2-containing proteins. Phosphorylated upon activation of the receptor-type kinase FLT3. Phosphorylated upon activation of the receptor-type kinase PDGFRA. Phosphorylated by activated PDGFRB. Expressed in brain, muscle and lung.

The protein localises to the cytoplasm. The catalysed reaction is O-phospho-L-tyrosyl-[protein] + H2O = L-tyrosyl-[protein] + phosphate. Its activity is regulated as follows. Inhibited by orthovanadate, molybdate and spermidine. Its function is as follows. Acts downstream of various receptor and cytoplasmic protein tyrosine kinases to participate in the signal transduction from the cell surface to the nucleus. Positively regulates MAPK signal transduction pathway. Dephosphorylates GAB1, ARHGAP35 and EGFR. Dephosphorylates ROCK2 at 'Tyr-722' resulting in stimulation of its RhoA binding activity. Dephosphorylates CDC73. Dephosphorylates SOX9 on tyrosine residues, leading to inactivate SOX9 and promote ossification. Dephosphorylates tyrosine-phosphorylated NEDD9/CAS-L. This chain is Tyrosine-protein phosphatase non-receptor type 11 (Ptpn11), found in Rattus norvegicus (Rat).